The following is a 979-amino-acid chain: Glutamate receptor ionotropic, kainate 5 (979 aa).

An N-terminal signal peptide occupies residues 1-14 (MPAELLLLLIVAFA). Residues 15–544 (NPSCQVLSSL…YFSFLDPFSP (530 aa)) are Extracellular-facing. Intrachain disulfides connect Cys-36–Cys-292, Cys-83–Cys-334, and Cys-165–Cys-170. N-linked (GlcNAc...) asparagine glycans are attached at residues Asn-219, Asn-271, Asn-285, Asn-322, Asn-372, Asn-394, Asn-400, Asn-407, Asn-414, and Asn-478. A helical transmembrane segment spans residues 545 to 565 (AVWLFMLLAYLAVSCVLFLAA). Topologically, residues 566-622 (RLSPYEWYNPHPCLRARPHILENQYTLGNSLWFPVGGFMQQGSEIMPRALSTRCVSG) are cytoplasmic. The helical transmembrane segment at 623–643 (VWWAFTLIIISSYTANLAAFL) threads the bilayer. At 644-803 (TVQRMEVPVE…HRAKGLGMEN (160 aa)) the chain is on the extracellular side. Asn-735 carries an N-linked (GlcNAc...) asparagine glycan. Residues 804 to 824 (IGGIFVVLICGLIIAVFVAVM) form a helical membrane-spanning segment. The Cytoplasmic segment spans residues 825 to 979 (EFIWSTRRSA…TGPRELTEHE (155 aa)). Over residues 856–867 (RKTSRSRRRRRP) the composition is skewed to basic residues. Disordered stretches follow at residues 856-875 (RKTSRSRRRRRPGGPSRALL), 890-925 (LYSAGAGGDAGAHGGPQRLLDDPGPPGGPRPQAPTP), and 942-979 (RASGAGAPPRGLGTPAEATSPPRPRPGPTGPRELTEHE). A compositionally biased stretch (gly residues) spans 894–903 (GAGGDAGAHG). Pro residues predominate over residues 912–923 (PGPPGGPRPQAP).

It belongs to the glutamate-gated ion channel (TC 1.A.10.1) family. GRIK5 subfamily. Homotetramer. Heterotetramer with GRIK2. Can form functional heteromeric receptors with GRIK1, GRIK2 and GRIK3. Forms a heteromeric complex with GRIK2. In terms of tissue distribution, expressed in the hippocampal mossy fiber synapses (at protein level).

Its subcellular location is the cell membrane. The protein resides in the postsynaptic cell membrane. It localises to the presynaptic cell membrane. Its function is as follows. Ionotropic glutamate receptor that functions as a cation-permeable ligand-gated ion channel, gated by L-glutamate and the glutamatergic agonist kainic acid. Cannot form functional channels on its own and produces channel activity only in heteromeric assembly with GRIK2 subunit. Can form functional heteromeric receptors with GRIK1 and GRIK3. The chain is Glutamate receptor ionotropic, kainate 5 (Grik5) from Mus musculus (Mouse).